The sequence spans 402 residues: uncharacterized protein (402 aa).

The Cytoplasmic segment spans residues Met-1–Trp-11. The helical transmembrane segment at Leu-12 to Asn-34 threads the bilayer. The Periplasmic segment spans residues Gly-35–Ala-43. Residues Pro-44–Ala-66 form a helical membrane-spanning segment. The Cytoplasmic portion of the chain corresponds to Gly-67–Arg-72. A helical transmembrane segment spans residues Phe-73–His-95. The Periplasmic segment spans residues Ser-96–Leu-99. Residues Met-100–Leu-122 form a helical membrane-spanning segment. Topologically, residues Ser-123–Gly-134 are cytoplasmic. The chain crosses the membrane as a helical span at residues Leu-135–Ile-154. Over Asp-155–Phe-168 the chain is Periplasmic. Residues Val-169 to Met-186 form a helical membrane-spanning segment. At Lys-187–Tyr-216 the chain is on the cytoplasmic side. The helical transmembrane segment at Trp-217–Val-236 threads the bilayer. Topologically, residues Ala-237 to Val-250 are periplasmic. A helical membrane pass occupies residues Ser-251 to Leu-273. The Cytoplasmic portion of the chain corresponds to Ser-274–Arg-279. Residues Ile-280–Leu-302 traverse the membrane as a helical segment. Over Asn-303–Thr-306 the chain is Periplasmic. The chain crosses the membrane as a helical span at residues Phe-307–Val-329. Topologically, residues Ser-330–Asn-341 are cytoplasmic. Residues Tyr-342–Gly-364 form a helical membrane-spanning segment. Residues Gly-365–Tyr-367 are Periplasmic-facing. Residues Val-368–Ile-387 form a helical membrane-spanning segment. Over Arg-388–Leu-402 the chain is Cytoplasmic.

Belongs to the major facilitator superfamily. Interacts with BtsS and YpdA.

It is found in the cell inner membrane. In terms of biological role, part of a nutrient-sensing regulatory network composed of the two-component regulatory systems BtsS/BtsR and YpdA/YpdB, and their respective target proteins, BtsT and YhjX. This is an uncharacterized protein from Escherichia coli (strain K12).